We begin with the raw amino-acid sequence, 517 residues long: Probable bifunctional methylthioribulose-1-phosphate dehydratase/enolase-phosphatase E1 1 (517 aa).

The interval 1-240 (MAAAALNGLK…AIKLYQLGLD (240 aa)) is methylthioribulose-1-phosphate dehydratase. Cysteine 112 contacts substrate. Histidine 130 and histidine 132 together coordinate Zn(2+). Glutamate 155 serves as the catalytic Proton donor/acceptor; for methylthioribulose-1-phosphate dehydratase activity. Histidine 205 contributes to the Zn(2+) binding site. The tract at residues 278-517 (IVLDIEGTTT…FKTITSFSDI (240 aa)) is enolase-phosphatase E1. Residues aspartate 281 and glutamate 283 each coordinate Mg(2+). Residues 416-417 (SS) and lysine 450 each bind substrate. A Mg(2+)-binding site is contributed by aspartate 476.

In the N-terminal section; belongs to the aldolase class II family. MtnB subfamily. The protein in the C-terminal section; belongs to the HAD-like hydrolase superfamily. MasA/MtnC family. It depends on Zn(2+) as a cofactor. Requires Mg(2+) as cofactor.

The enzyme catalyses 5-(methylsulfanyl)-D-ribulose 1-phosphate = 5-methylsulfanyl-2,3-dioxopentyl phosphate + H2O. The catalysed reaction is 5-methylsulfanyl-2,3-dioxopentyl phosphate + H2O = 1,2-dihydroxy-5-(methylsulfanyl)pent-1-en-3-one + phosphate. It functions in the pathway amino-acid biosynthesis; L-methionine biosynthesis via salvage pathway; L-methionine from S-methyl-5-thio-alpha-D-ribose 1-phosphate: step 2/6. The protein operates within amino-acid biosynthesis; L-methionine biosynthesis via salvage pathway; L-methionine from S-methyl-5-thio-alpha-D-ribose 1-phosphate: step 3/6. Its pathway is amino-acid biosynthesis; L-methionine biosynthesis via salvage pathway; L-methionine from S-methyl-5-thio-alpha-D-ribose 1-phosphate: step 4/6. In Vitis vinifera (Grape), this protein is Probable bifunctional methylthioribulose-1-phosphate dehydratase/enolase-phosphatase E1 1.